The following is a 299-amino-acid chain: Transcription factor BHLH148 (299 aa).

The disordered stretch occupies residues 90 to 127; that stretch reads RMGGGGGGGEKGEGEEMEEEEEVPQRRRRGQGADVESS. The segment covering 102-111 has biased composition (acidic residues); that stretch reads EGEEMEEEEE. Residues 127 to 140 form a basic motif; degenerate region; sequence SRGFRHMMRERQRR. The bHLH domain maps to 127 to 176; sequence SRGFRHMMRERQRREKLSQSYADLYAMVSSRSKGDKNSIVQSAAIYIHEL. A helix-loop-helix motif region spans residues 141 to 176; the sequence is EKLSQSYADLYAMVSSRSKGDKNSIVQSAAIYIHEL. The interval 273–299 is disordered; the sequence is ERNQPDSDAPFPGSKGWTQTSHVQNVF. Residues 288–299 are compositionally biased toward polar residues; the sequence is GWTQTSHVQNVF.

Belongs to the bHLH protein family. In terms of assembly, interacts with TIFY10A/JAZ6, TIFY10B/JAZ7, TIFY11A/JAZ9, TIFY11C/JAZ11, and TIFY11D/JAZ12.

It is found in the nucleus. Its function is as follows. May act on an initial response of jasmonate-regulated gene expression toward drought tolerance as part of a BHLH148-TIFY11D/JAZ12-COI1A complex. This is Transcription factor BHLH148 from Oryza sativa subsp. japonica (Rice).